The sequence spans 208 residues: Small ribosomal subunit protein uS2 (208 aa).

The interval 189-208 (KPDQDLPVPPEEFETRLVQT) is disordered.

Belongs to the universal ribosomal protein uS2 family.

This chain is Small ribosomal subunit protein uS2, found in Pyrobaculum arsenaticum (strain DSM 13514 / JCM 11321 / PZ6).